Here is a 373-residue protein sequence, read N- to C-terminus: tRNA-specific 2-thiouridylase MnmA (373 aa).

ATP-binding positions include 12 to 19 (GMSGGVDS) and Met38. An interaction with target base in tRNA region spans residues 98–100 (NPD). Cys103 (nucleophile) is an active-site residue. The cysteines at positions 103 and 200 are disulfide-linked. Gly127 serves as a coordination point for ATP. Positions 150–152 (KDQ) are interaction with tRNA. The active-site Cysteine persulfide intermediate is Cys200. The tract at residues 312 to 313 (RY) is interaction with tRNA.

Belongs to the MnmA/TRMU family.

It localises to the cytoplasm. It catalyses the reaction S-sulfanyl-L-cysteinyl-[protein] + uridine(34) in tRNA + AH2 + ATP = 2-thiouridine(34) in tRNA + L-cysteinyl-[protein] + A + AMP + diphosphate + H(+). Its function is as follows. Catalyzes the 2-thiolation of uridine at the wobble position (U34) of tRNA, leading to the formation of s(2)U34. The sequence is that of tRNA-specific 2-thiouridylase MnmA from Streptococcus pneumoniae (strain JJA).